The following is a 616-amino-acid chain: UvrABC system protein C (616 aa).

The 75-residue stretch at 11-85 (ASPGVYIFRR…IKQHRPHYNV (75 aa)) folds into the GIY-YIG domain. Residues 194–229 (APVIARLKADMQAAARAQDFEQAARLRDRVQAVEKL) form the UVR domain.

It belongs to the UvrC family. As to quaternary structure, interacts with UvrB in an incision complex.

Its subcellular location is the cytoplasm. Functionally, the UvrABC repair system catalyzes the recognition and processing of DNA lesions. UvrC both incises the 5' and 3' sides of the lesion. The N-terminal half is responsible for the 3' incision and the C-terminal half is responsible for the 5' incision. The chain is UvrABC system protein C from Deinococcus geothermalis (strain DSM 11300 / CIP 105573 / AG-3a).